The sequence spans 1133 residues: DNA-directed RNA polymerase subunit beta (1133 aa).

Residues 1085–1133 (ADVSSRHTPSRPTYESVTSEDLSPAAGGTFTLARRSREEDEDREEEDDF) are disordered. A compositionally biased stretch (polar residues) spans 1090 to 1105 (RHTPSRPTYESVTSED). Over residues 1123–1133 (EDEDREEEDDF) the composition is skewed to acidic residues.

It belongs to the RNA polymerase beta chain family. In cyanobacteria the RNAP catalytic core is composed of 2 alpha, 1 beta, 1 beta', 1 gamma and 1 omega subunit. When a sigma factor is associated with the core the holoenzyme is formed, which can initiate transcription.

It carries out the reaction RNA(n) + a ribonucleoside 5'-triphosphate = RNA(n+1) + diphosphate. Its function is as follows. DNA-dependent RNA polymerase catalyzes the transcription of DNA into RNA using the four ribonucleoside triphosphates as substrates. This is DNA-directed RNA polymerase subunit beta from Synechococcus sp. (strain JA-3-3Ab) (Cyanobacteria bacterium Yellowstone A-Prime).